The primary structure comprises 250 residues: 3-deoxy-manno-octulosonate cytidylyltransferase (250 aa).

The protein belongs to the KdsB family.

It is found in the cytoplasm. It carries out the reaction 3-deoxy-alpha-D-manno-oct-2-ulosonate + CTP = CMP-3-deoxy-beta-D-manno-octulosonate + diphosphate. It functions in the pathway nucleotide-sugar biosynthesis; CMP-3-deoxy-D-manno-octulosonate biosynthesis; CMP-3-deoxy-D-manno-octulosonate from 3-deoxy-D-manno-octulosonate and CTP: step 1/1. The protein operates within bacterial outer membrane biogenesis; lipopolysaccharide biosynthesis. Activates KDO (a required 8-carbon sugar) for incorporation into bacterial lipopolysaccharide in Gram-negative bacteria. The chain is 3-deoxy-manno-octulosonate cytidylyltransferase from Azorhizobium caulinodans (strain ATCC 43989 / DSM 5975 / JCM 20966 / LMG 6465 / NBRC 14845 / NCIMB 13405 / ORS 571).